Here is a 511-residue protein sequence, read N- to C-terminus: Histidine ammonia-lyase 2 (511 aa).

Residues 144 to 146 (SSG) constitute a cross-link (5-imidazolinone (Ser-Gly)). Residue Ser-145 is modified to 2,3-didehydroalanine (Ser).

This sequence belongs to the PAL/histidase family. In terms of processing, contains an active site 4-methylidene-imidazol-5-one (MIO), which is formed autocatalytically by cyclization and dehydration of residues Ser-Ser-Gly.

The protein localises to the cytoplasm. The catalysed reaction is L-histidine = trans-urocanate + NH4(+). The protein operates within amino-acid degradation; L-histidine degradation into L-glutamate; N-formimidoyl-L-glutamate from L-histidine: step 1/3. The chain is Histidine ammonia-lyase 2 (hutH2) from Fusobacterium nucleatum subsp. nucleatum (strain ATCC 25586 / DSM 15643 / BCRC 10681 / CIP 101130 / JCM 8532 / KCTC 2640 / LMG 13131 / VPI 4355).